A 460-amino-acid polypeptide reads, in one-letter code: Cysteine--tRNA ligase (460 aa).

Cysteine 28 lines the Zn(2+) pocket. Positions 30–40 (MTVYDYCHLGH) match the 'HIGH' region motif. Zn(2+) is bound by residues cysteine 209, histidine 234, and glutamate 238. The 'KMSKS' region signature appears at 266–270 (KMSKS). Lysine 269 lines the ATP pocket.

The protein belongs to the class-I aminoacyl-tRNA synthetase family. In terms of assembly, monomer. It depends on Zn(2+) as a cofactor.

The protein resides in the cytoplasm. The enzyme catalyses tRNA(Cys) + L-cysteine + ATP = L-cysteinyl-tRNA(Cys) + AMP + diphosphate. The sequence is that of Cysteine--tRNA ligase from Pseudomonas putida (strain GB-1).